The chain runs to 136 residues: Histone H3-like 3 (136 aa).

Residues 1–15 (MARTKQTARKSHGGK) show a composition bias toward basic residues. Positions 1–42 (MARTKQTARKSHGGKAPRTLLATKAARKSAPTTGGVKKPHRY) are disordered. N6,N6,N6-trimethyllysine; alternate occurs at positions 5 and 10. Residues Lys5 and Lys10 each carry the N6,N6-dimethyllysine; alternate modification. N6-methyllysine; alternate is present on residues Lys5 and Lys10. Lys10 is subject to N6-acetyllysine; alternate. Ser11 is modified (phosphoserine). Position 15 is an N6-acetyllysine (Lys15). N6-methyllysine; alternate is present on residues Lys24 and Lys28. Lys24 bears the N6-acetyllysine; alternate mark. Residue Lys28 is modified to N6,N6,N6-trimethyllysine; alternate. N6,N6-dimethyllysine; alternate is present on Lys28. Ser29 carries the phosphoserine modification. Lys37 is subject to N6,N6,N6-trimethyllysine; alternate. Lys37 bears the N6,N6-dimethyllysine; alternate mark. N6-methyllysine; alternate is present on Lys37.

This sequence belongs to the histone H3 family. The nucleosome is a histone octamer containing two molecules each of H2A, H2B, H3 and H4 assembled in one H3-H4 heterotetramer and two H2A-H2B heterodimers. The octamer wraps approximately 147 bp of DNA. In terms of tissue distribution, expressed in roots, seedlings, leaves and open flowers.

The protein resides in the nucleus. Its subcellular location is the chromosome. In terms of biological role, core component of nucleosome. Nucleosomes wrap and compact DNA into chromatin, limiting DNA accessibility to the cellular machineries which require DNA as a template. Histones thereby play a central role in transcription regulation, DNA repair, DNA replication and chromosomal stability. DNA accessibility is regulated via a complex set of post-translational modifications of histones, also called histone code, and nucleosome remodeling. The sequence is that of Histone H3-like 3 from Arabidopsis thaliana (Mouse-ear cress).